The chain runs to 637 residues: MVNEKTSTDQLVRRFIEDLGVTYEEQGSSNIQIKQALRSASKSKSQSGVGKPEFIFFSGNHLIIVEDKLAIDKLEYKNNDGIIDTEFPFRRDYAVNGAVHYARHIIEKTNSYKEVIAIGIAGDGLHYQIHPYFVSETELKKLPEMKSLEDISPENIEEFYKVAVLGELPKEERELREVNKIAADMHEDLRNYGQLEGEKKATVVSAILLALEEPTFSLNQLIGSDRVGGTDGEIIFNAVRVYLENAGIVPYAKVGEMLDQFIFIQRDVTLNTVNSNLEMTPLKYFATTLEAEIMDKIKSNTDFDILGNFYGEFVKYGGNDGNPLGIVLTPRHITSLMAELIGINKSDFVLDPACGTGAFLISAMNRMLGQAENDDERRDIKQNRLYGIEIQQKLFTIATTNMILRGDGKSNLIRDNCLTFDNTIMNGYGINKILMNPPYSQAKNDQTQHLSELSFIQQALEMLVVGGKLCAIVPQSTMVGKNRHDKARKKQILKQHTLETVITLNKDTFHGVGVNPCIVIFKAGIKHPENKRVSFVNFEDDGHVVRKHVGLVGDGTEKGKREHLLAVLAGDEDDGTDLIVKTAIKDTDEWLHSFYYFNDGIPSEDDFYKTVANYLTFQFDMTANGKGYLFEGVEENE.

This sequence in the C-terminal section; belongs to the N(4)/N(6)-methyltransferase family. In terms of assembly, heterotrimer of two A and one B subunit. Both subunits are necessary for DNA-binding, which is sequence non-specific. Mg(2+) serves as cofactor.

It carries out the reaction Endonucleolytic cleavage of DNA to give specific double-stranded fragments with terminal 5'-phosphates.. The catalysed reaction is a 2'-deoxyadenosine in DNA + S-adenosyl-L-methionine = an N(6)-methyl-2'-deoxyadenosine in DNA + S-adenosyl-L-homocysteine + H(+). With respect to regulation, DNA restriction requires S-adenosyl-L-methionine and Mg(2+), and is inhibited by S-adenosyl-homocysteine. SAM may be a cofactor for DNA restriction. A B, G, H and S subtype restriction enzyme that recognizes the double-stranded sequence 5'-CGAN(6)TGC-3' and cleaves bilaterally and symmetrically 10 base pairs upstream and 12 base pairs downstream of the sequence to release a 34-base pair fragment. Methylation of the recognition sequence occurs on the adenine in either one or both strands; seems to methylate restricted DNA. This subunit has no methylation or DNA restriction activity on its own. This Heyndrickxia coagulans (Weizmannia coagulans) protein is Type II restriction enzyme and methyltransferase RM.BcgI.